A 121-amino-acid chain; its full sequence is Large ribosomal subunit protein uL18c (121 aa).

This sequence belongs to the universal ribosomal protein uL18 family. As to quaternary structure, part of the 50S ribosomal subunit; contacts the 5S rRNA.

The protein resides in the plastid. It is found in the cyanelle. Its function is as follows. Binds 5S rRNA, forms part of the central protuberance of the 50S subunit. This Cyanophora paradoxa protein is Large ribosomal subunit protein uL18c (rpl18).